The following is a 120-amino-acid chain: Ribonuclease P protein component (120 aa).

It belongs to the RnpA family. Consists of a catalytic RNA component (M1 or rnpB) and a protein subunit.

The enzyme catalyses Endonucleolytic cleavage of RNA, removing 5'-extranucleotides from tRNA precursor.. RNaseP catalyzes the removal of the 5'-leader sequence from pre-tRNA to produce the mature 5'-terminus. It can also cleave other RNA substrates such as 4.5S RNA. The protein component plays an auxiliary but essential role in vivo by binding to the 5'-leader sequence and broadening the substrate specificity of the ribozyme. This Chlamydia trachomatis serovar L2 (strain ATCC VR-902B / DSM 19102 / 434/Bu) protein is Ribonuclease P protein component.